The following is a 341-amino-acid chain: Ferrochelatase (341 aa).

Fe cation is bound by residues histidine 196 and glutamate 277.

Belongs to the ferrochelatase family.

It localises to the cytoplasm. The enzyme catalyses heme b + 2 H(+) = protoporphyrin IX + Fe(2+). Its pathway is porphyrin-containing compound metabolism; protoheme biosynthesis; protoheme from protoporphyrin-IX: step 1/1. Catalyzes the ferrous insertion into protoporphyrin IX. The sequence is that of Ferrochelatase from Synechococcus sp. (strain JA-3-3Ab) (Cyanobacteria bacterium Yellowstone A-Prime).